Reading from the N-terminus, the 1174-residue chain is Tyrosine-protein phosphatase non-receptor type 21 (1174 aa).

Residues 23–308 form the FERM domain; it reads LVARIQLLNN…ARHKFYRLNQ (286 aa). Positions 396-423 are enriched in polar residues; it reads SAHSTNSLNNPQPYLQPSPMSSNPSITG. The interval 396–445 is disordered; sequence SAHSTNSLNNPQPYLQPSPMSSNPSITGSDVMRPDYLPSHRHSAVIPPSY. S577, S589, S590, S637, and S673 each carry phosphoserine. The disordered stretch occupies residues 673 to 692; sequence SQPSVFTERTQREGPEEAEG. The span at 681 to 692 shows a compositional bias: basic and acidic residues; it reads RTQREGPEEAEG. A phosphoserine mark is found at S710 and S711. 2 disordered regions span residues 711 to 745 and 769 to 806; these read SEEE…DPPG and KRMM…TSGR. The segment covering 712–722 has biased composition (acidic residues); it reads EEEEDEDFEEE. Residues 796 to 805 show a composition bias toward polar residues; that stretch reads MSESDLTTSG. A phosphoserine mark is found at S797, S799, and S804. The Tyrosine-protein phosphatase domain maps to 896–1167; it reads VFTEYERILK…TFVYRVLIQF (272 aa). Substrate is bound by residues E1067, 1108–1114, and Q1152; that span reads CSAGVGR. The active-site Phosphocysteine intermediate is the C1108.

This sequence belongs to the protein-tyrosine phosphatase family. Non-receptor class subfamily.

The protein resides in the cytoplasm. The protein localises to the cytoskeleton. It carries out the reaction O-phospho-L-tyrosyl-[protein] + H2O = L-tyrosyl-[protein] + phosphate. This Homo sapiens (Human) protein is Tyrosine-protein phosphatase non-receptor type 21 (PTPN21).